The following is a 265-amino-acid chain: MDFLQSIILGIIQGITEFLPISSSAHLILMPILTGWDDQGVGFDLAVHVGTLLAVILYFRKDVSELFIDGLRSIAARQHVGQSRLGWAVVVGTIPACIAGILLLDYIDTALRAVGVIITTTVVFAVLLAAGDRFARGSRTLQDIGFKDAIIVGLAQAVALIPGTSRSGATITAGLFLGLNRESASKFSFFMAIPITAAAALVKLLTIASESIAVDWLGFLVGGIVSFLTAITAIHFFLKWLNAFGMWPYVIYRLVLAVVLYLLFF.

The next 8 helical transmembrane spans lie at 1 to 21 (MDFLQSIILGIIQGITEFLPI), 39 to 59 (QGVGFDLAVHVGTLLAVILYF), 87 to 107 (WAVVVGTIPACIAGILLLDYI), 110 to 130 (ALRAVGVIITTTVVFAVLLAA), 144 to 164 (IGFKDAIIVGLAQAVALIPGT), 187 to 207 (FSFFMAIPITAAAALVKLLTI), 217 to 237 (LGFLVGGIVSFLTAITAIHFF), and 244 to 264 (FGMWPYVIYRLVLAVVLYLLF).

The protein belongs to the UppP family.

Its subcellular location is the cell inner membrane. It catalyses the reaction di-trans,octa-cis-undecaprenyl diphosphate + H2O = di-trans,octa-cis-undecaprenyl phosphate + phosphate + H(+). Its function is as follows. Catalyzes the dephosphorylation of undecaprenyl diphosphate (UPP). Confers resistance to bacitracin. The sequence is that of Undecaprenyl-diphosphatase from Idiomarina loihiensis (strain ATCC BAA-735 / DSM 15497 / L2-TR).